Here is a 403-residue protein sequence, read N- to C-terminus: MVKILNNLIFVLNCGSSSVKFAILNPDNKKKYLSGLVECLFLSKTYMKWKDLTTEHKKCIGSNLSHKDALNFIFNKFFLEKKDIYKNIVGIGHRVVHGGNKIKSSTLIDDNIIQLIQKAISFAPLHNPANLIGIKTAIEKFPIFAKKNVAVFDTSFYQNMPETSFLYAIPYFFYKEHHIRRYGAHGTSHHYVASEVALILNKNFNSLNVITCHLGNGASVSAVCNGICVDTSMGLTPLEGLVMGTRSGDIDPSIIFFMYQKLGMSIDEIHTILTKESGLLGLSGISSDFRYFEKKYYFEKKARLAVDIFCHRLSKYIASYMSLMENNLDAIVFTGGIGENVPLIREITLSKLLLIGFKIDTQRNLGIKNGKHGLITTDKSRPAFVIPTDEELAIAQETIKIIK.

Asn13 contributes to the Mg(2+) binding site. Lys20 contacts ATP. Position 94 (Arg94) interacts with substrate. The active-site Proton donor/acceptor is Asp153. ATP contacts are provided by residues 213–217 (HLGNG), 288–290 (DFR), and 336–340 (GIGEN). Glu390 contributes to the Mg(2+) binding site.

The protein belongs to the acetokinase family. As to quaternary structure, homodimer. It depends on Mg(2+) as a cofactor. Mn(2+) serves as cofactor.

The protein resides in the cytoplasm. It catalyses the reaction acetate + ATP = acetyl phosphate + ADP. The protein operates within metabolic intermediate biosynthesis; acetyl-CoA biosynthesis; acetyl-CoA from acetate: step 1/2. In terms of biological role, catalyzes the formation of acetyl phosphate from acetate and ATP. Can also catalyze the reverse reaction. This is Acetate kinase from Buchnera aphidicola subsp. Schizaphis graminum (strain Sg).